The chain runs to 158 residues: Regulator of sigma D (158 aa).

It belongs to the Rsd/AlgQ family. In terms of assembly, interacts with RpoD.

The protein resides in the cytoplasm. Its function is as follows. Binds RpoD and negatively regulates RpoD-mediated transcription activation by preventing the interaction between the primary sigma factor RpoD with the catalytic core of the RNA polymerase and with promoter DNA. May be involved in replacement of the RNA polymerase sigma subunit from RpoD to RpoS during the transition from exponential growth to the stationary phase. This is Regulator of sigma D from Escherichia fergusonii (strain ATCC 35469 / DSM 13698 / CCUG 18766 / IAM 14443 / JCM 21226 / LMG 7866 / NBRC 102419 / NCTC 12128 / CDC 0568-73).